Consider the following 409-residue polypeptide: Putative actin-fragmin kinase DDB_G0268812 (409 aa).

Residues 1–45 are disordered; it reads MKTFRDFKKKIKNNNNNKNNKNNNINNNNSNNNKNNKNNNNNNSN. The stretch at 5–46 forms a coiled coil; sequence RDFKKKIKNNNNNKNNKNNNINNNNSNNNKNNKNNNNNNSNN. A compositionally biased stretch (low complexity) spans 13–45; sequence NNNNNKNNKNNNINNNNSNNNKNNKNNNNNNSN.

The protein belongs to the protein kinase superfamily. AFK Ser/Thr protein kinase family.

The chain is Putative actin-fragmin kinase DDB_G0268812 from Dictyostelium discoideum (Social amoeba).